Here is a 220-residue protein sequence, read N- to C-terminus: MRLKHFKTFLFITMAIIVIGTGCANKKKKKDEYNKPAIFWYQGILREILFANLETADNYYSSLQSEHINSPLVPEAMLALGQAHMKKKEYVLASFYFDEYIKRFGTKDNVDYLTFLKLQSHYYAFKNHSKDQEFISNSIVSLGEFIEKYPNSRYRPYVEYMQIKFILGQNELNRAIANVYKKRHKPEGVKRYLERIDETLEKETKPKPSHMPWYVLIFDW.

Residues 1-22 (MRLKHFKTFLFITMAIIVIGTG) form the signal peptide. Cys23 carries the N-palmitoyl cysteine lipid modification. Cys23 is lipidated: S-diacylglycerol cysteine.

The protein belongs to the BamD family. Part of the Bam complex.

The protein localises to the cell outer membrane. Its function is as follows. Part of the outer membrane protein assembly complex, which is involved in assembly and insertion of beta-barrel proteins into the outer membrane. The polypeptide is Outer membrane protein assembly factor BamD (Helicobacter pylori (strain ATCC 700392 / 26695) (Campylobacter pylori)).